An 88-amino-acid polypeptide reads, in one-letter code: Apolipoprotein C-I (88 aa).

A signal peptide spans 1–26 (MRLFLSLPVLVVVLAMVLEGPAPAQA).

Belongs to the apolipoprotein C1 family.

The protein resides in the secreted. Functionally, inhibitor of lipoprotein binding to the low density lipoprotein (LDL) receptor, LDL receptor-related protein, and very low density lipoprotein (VLDL) receptor. Associates with high density lipoproteins (HDL) and the triacylglycerol-rich lipoproteins in the plasma and makes up about 10% of the protein of the VLDL and 2% of that of HDL. Appears to interfere directly with fatty acid uptake and is also the major plasma inhibitor of cholesteryl ester transfer protein (CETP). Binds free fatty acids and reduces their intracellular esterification. Modulates the interaction of APOE with beta-migrating VLDL and inhibits binding of beta-VLDL to the LDL receptor-related protein. In Ailurus fulgens (Himalayan red panda), this protein is Apolipoprotein C-I (APOC1).